The sequence spans 420 residues: 3-phosphoshikimate 1-carboxyvinyltransferase (420 aa).

Residues 1–24 (MTRTAKLTIIPPGRPLSGRAMPPG) form a disordered region. 3-phosphoshikimate contacts are provided by Lys26, Ser27, and Arg31. Residue Lys26 coordinates phosphoenolpyruvate. Residues Gly97 and Arg125 each contribute to the phosphoenolpyruvate site. 3-phosphoshikimate is bound by residues Ser170, Ser171, Gln172, Asp297, Asn320, and Lys324. A phosphoenolpyruvate-binding site is contributed by Gln172. The Proton acceptor role is filled by Asp297. Phosphoenolpyruvate is bound by residues Arg328, Arg375, and Lys400.

Belongs to the EPSP synthase family. In terms of assembly, monomer.

Its subcellular location is the cytoplasm. It catalyses the reaction 3-phosphoshikimate + phosphoenolpyruvate = 5-O-(1-carboxyvinyl)-3-phosphoshikimate + phosphate. Its pathway is metabolic intermediate biosynthesis; chorismate biosynthesis; chorismate from D-erythrose 4-phosphate and phosphoenolpyruvate: step 6/7. Functionally, catalyzes the transfer of the enolpyruvyl moiety of phosphoenolpyruvate (PEP) to the 5-hydroxyl of shikimate-3-phosphate (S3P) to produce enolpyruvyl shikimate-3-phosphate and inorganic phosphate. In Rhizobium etli (strain CIAT 652), this protein is 3-phosphoshikimate 1-carboxyvinyltransferase.